A 767-amino-acid polypeptide reads, in one-letter code: Two-component response regulator-like PRR73 (767 aa).

The segment at M1–E64 is disordered. Residues R82–W200 form the Response regulatory domain. Low complexity predominate over residues S205–G214. Disordered regions lie at residues S205 to W272, R312 to T388, A476 to V546, A646 to G701, and N727 to R767. The span at D238–L252 shows a compositional bias: acidic residues. Composition is skewed to polar residues over residues D263–W272, R343–T361, and C488–A497. Positions G518–S531 are enriched in low complexity. Over residues T532–R543 the composition is skewed to polar residues. The span at G689–S700 shows a compositional bias: gly residues. In terms of domain architecture, CCT spans R712–Q754. A compositionally biased stretch (basic residues) spans N727–K738.

The protein belongs to the ARR-like family.

It localises to the nucleus. Controls photoperiodic flowering response. Seems to be one of the component of the circadian clock. Expression of several members of the ARR-like family is controlled by circadian rhythm. The particular coordinated sequential expression of PRR73, PRR37, PRR95, PRR59 and PPR1 result to circadian waves that may be at the basis of the endogenous circadian clock. In Oryza sativa subsp. japonica (Rice), this protein is Two-component response regulator-like PRR73 (PRR73).